Here is a 177-residue protein sequence, read N- to C-terminus: ATP synthase subunit delta (177 aa).

It belongs to the ATPase delta chain family. As to quaternary structure, F-type ATPases have 2 components, F(1) - the catalytic core - and F(0) - the membrane proton channel. F(1) has five subunits: alpha(3), beta(3), gamma(1), delta(1), epsilon(1). F(0) has three main subunits: a(1), b(2) and c(10-14). The alpha and beta chains form an alternating ring which encloses part of the gamma chain. F(1) is attached to F(0) by a central stalk formed by the gamma and epsilon chains, while a peripheral stalk is formed by the delta and b chains.

It localises to the cell inner membrane. Its function is as follows. F(1)F(0) ATP synthase produces ATP from ADP in the presence of a proton or sodium gradient. F-type ATPases consist of two structural domains, F(1) containing the extramembraneous catalytic core and F(0) containing the membrane proton channel, linked together by a central stalk and a peripheral stalk. During catalysis, ATP synthesis in the catalytic domain of F(1) is coupled via a rotary mechanism of the central stalk subunits to proton translocation. In terms of biological role, this protein is part of the stalk that links CF(0) to CF(1). It either transmits conformational changes from CF(0) to CF(1) or is implicated in proton conduction. This Shewanella woodyi (strain ATCC 51908 / MS32) protein is ATP synthase subunit delta.